Here is a 72-residue protein sequence, read N- to C-terminus: Translation initiation factor IF-1 (72 aa).

The 72-residue stretch at 1–72 (MAKEDNIEMQ…SKGRIVFRAR (72 aa)) folds into the S1-like domain.

The protein belongs to the IF-1 family. As to quaternary structure, component of the 30S ribosomal translation pre-initiation complex which assembles on the 30S ribosome in the order IF-2 and IF-3, IF-1 and N-formylmethionyl-tRNA(fMet); mRNA recruitment can occur at any time during PIC assembly.

It is found in the cytoplasm. In terms of biological role, one of the essential components for the initiation of protein synthesis. Stabilizes the binding of IF-2 and IF-3 on the 30S subunit to which N-formylmethionyl-tRNA(fMet) subsequently binds. Helps modulate mRNA selection, yielding the 30S pre-initiation complex (PIC). Upon addition of the 50S ribosomal subunit IF-1, IF-2 and IF-3 are released leaving the mature 70S translation initiation complex. The protein is Translation initiation factor IF-1 of Shewanella frigidimarina (strain NCIMB 400).